A 366-amino-acid polypeptide reads, in one-letter code: S-adenosylmethionine:tRNA ribosyltransferase-isomerase (366 aa).

This sequence belongs to the QueA family. As to quaternary structure, monomer.

Its subcellular location is the cytoplasm. The catalysed reaction is 7-aminomethyl-7-carbaguanosine(34) in tRNA + S-adenosyl-L-methionine = epoxyqueuosine(34) in tRNA + adenine + L-methionine + 2 H(+). It functions in the pathway tRNA modification; tRNA-queuosine biosynthesis. Transfers and isomerizes the ribose moiety from AdoMet to the 7-aminomethyl group of 7-deazaguanine (preQ1-tRNA) to give epoxyqueuosine (oQ-tRNA). The protein is S-adenosylmethionine:tRNA ribosyltransferase-isomerase of Methylorubrum populi (strain ATCC BAA-705 / NCIMB 13946 / BJ001) (Methylobacterium populi).